Reading from the N-terminus, the 250-residue chain is Probable transcriptional regulatory protein RHA1_ro06891 (250 aa).

The protein belongs to the TACO1 family.

Its subcellular location is the cytoplasm. The chain is Probable transcriptional regulatory protein RHA1_ro06891 from Rhodococcus jostii (strain RHA1).